Reading from the N-terminus, the 235-residue chain is Small ribosomal subunit protein uS3 (235 aa).

Residues 39–107 (IRQYVFKALP…DVSLNIVEIR (69 aa)) form the KH type-2 domain.

It belongs to the universal ribosomal protein uS3 family. In terms of assembly, part of the 30S ribosomal subunit. Forms a tight complex with proteins S10 and S14.

Its function is as follows. Binds the lower part of the 30S subunit head. Binds mRNA in the 70S ribosome, positioning it for translation. This is Small ribosomal subunit protein uS3 from Sphingopyxis alaskensis (strain DSM 13593 / LMG 18877 / RB2256) (Sphingomonas alaskensis).